A 537-amino-acid chain; its full sequence is Putative cysteine ligase BshC (537 aa).

A coiled-coil region spans residues 422–450 (IEKVEGMIEQQRRLNKDLLDEVAGNQNNI).

It belongs to the BshC family.

Involved in bacillithiol (BSH) biosynthesis. May catalyze the last step of the pathway, the addition of cysteine to glucosamine malate (GlcN-Mal) to generate BSH. The protein is Putative cysteine ligase BshC of Staphylococcus aureus (strain USA300).